The sequence spans 291 residues: uncharacterized protein (291 aa).

Residues 77-140 are disordered; the sequence is TVPQSSPTAI…PPTPVVEKSP (64 aa). The segment covering 125–134 has biased composition (pro residues); the sequence is PVTPAHPPTP.

This is an uncharacterized protein from Synechocystis sp. (strain ATCC 27184 / PCC 6803 / Kazusa).